A 446-amino-acid polypeptide reads, in one-letter code: Glutamyl-tRNA reductase (446 aa).

Substrate-binding positions include 49-52 (TCNR), serine 107, 112-114 (EPQ), and glutamine 118. Cysteine 50 (nucleophile) is an active-site residue. 187–192 (GAGETI) lines the NADP(+) pocket. The disordered stretch occupies residues 417–446 (NANEDTRESVDKEQTGTTQGAARGDQRSTG). A compositionally biased stretch (basic and acidic residues) spans 420 to 430 (EDTRESVDKEQ).

The protein belongs to the glutamyl-tRNA reductase family. Homodimer.

The enzyme catalyses (S)-4-amino-5-oxopentanoate + tRNA(Glu) + NADP(+) = L-glutamyl-tRNA(Glu) + NADPH + H(+). Its pathway is porphyrin-containing compound metabolism; protoporphyrin-IX biosynthesis; 5-aminolevulinate from L-glutamyl-tRNA(Glu): step 1/2. Functionally, catalyzes the NADPH-dependent reduction of glutamyl-tRNA(Glu) to glutamate 1-semialdehyde (GSA). The protein is Glutamyl-tRNA reductase of Alkalilimnicola ehrlichii (strain ATCC BAA-1101 / DSM 17681 / MLHE-1).